Here is a 729-residue protein sequence, read N- to C-terminus: Carbon monoxide dehydrogenase/acetyl-CoA synthase subunit alpha (729 aa).

Residues C506, C509, C518, and C528 each coordinate [4Fe-4S] cluster. Ni(2+) is bound at residue C509. 3 residues coordinate Ni(2+): C595, G596, and C597.

Tetramer of two alpha and two beta chains. Requires Ni cation as cofactor. [4Fe-4S] cluster is required as a cofactor.

It carries out the reaction Co(I)-[corrinoid Fe-S protein] + acetyl-CoA + H(+) = methyl-Co(III)-[corrinoid Fe-S protein] + CO + CoA. In terms of biological role, the beta subunit generates CO from CO(2), while the alpha subunit (this protein) combines the CO with CoA and a methyl group to form acetyl-CoA. The methyl group, which is incorporated into acetyl-CoA, is transferred to the alpha subunit by a corrinoid iron-sulfur protein. The chain is Carbon monoxide dehydrogenase/acetyl-CoA synthase subunit alpha from Moorella thermoacetica (Clostridium thermoaceticum).